We begin with the raw amino-acid sequence, 313 residues long: Porphobilinogen deaminase (313 aa).

Residue cysteine 242 is modified to S-(dipyrrolylmethanemethyl)cysteine.

Belongs to the HMBS family. In terms of assembly, monomer. Dipyrromethane is required as a cofactor.

The enzyme catalyses 4 porphobilinogen + H2O = hydroxymethylbilane + 4 NH4(+). It participates in porphyrin-containing compound metabolism; protoporphyrin-IX biosynthesis; coproporphyrinogen-III from 5-aminolevulinate: step 2/4. Functionally, tetrapolymerization of the monopyrrole PBG into the hydroxymethylbilane pre-uroporphyrinogen in several discrete steps. The chain is Porphobilinogen deaminase from Marinobacter nauticus (strain ATCC 700491 / DSM 11845 / VT8) (Marinobacter aquaeolei).